The sequence spans 612 residues: tRNA(Met) cytidine acetyltransferase TmcA (612 aa).

ATP contacts are provided by residues Q136, 161 to 170, and R284; that span reads GRGKSTLLGQ. Residues 319-499 form the N-acetyltransferase domain; that stretch reads KHASELEEAL…PAAIYALPLT (181 aa). 424–426 provides a ligand contact to acetyl-CoA; that stretch reads IAV.

The protein belongs to the RNA cytidine acetyltransferase family. TmcA subfamily.

It localises to the cytoplasm. The catalysed reaction is cytidine(34) in elongator tRNA(Met) + acetyl-CoA + ATP + H2O = N(4)-acetylcytidine(34) in elongator tRNA(Met) + ADP + phosphate + CoA + H(+). Catalyzes the formation of N(4)-acetylcytidine (ac(4)C) at the wobble position of tRNA(Met), by using acetyl-CoA as an acetyl donor and ATP (or GTP). The protein is tRNA(Met) cytidine acetyltransferase TmcA of Idiomarina loihiensis (strain ATCC BAA-735 / DSM 15497 / L2-TR).